The primary structure comprises 137 residues: Large ribosomal subunit protein uL16 (137 aa).

It belongs to the universal ribosomal protein uL16 family. Part of the 50S ribosomal subunit.

Its function is as follows. Binds 23S rRNA and is also seen to make contacts with the A and possibly P site tRNAs. This Psychrobacter arcticus (strain DSM 17307 / VKM B-2377 / 273-4) protein is Large ribosomal subunit protein uL16.